The chain runs to 192 residues: AYSWDNRVKYVVRYMYDIDNNGFLDKNDFECLALRNTLIEGRGEFNEAAYANNQKIMSNLWNEIAELADFNKDGEVTIDEFKKAVQNVCVGKAFATFPAAFKVFIANQFKTVDVNGDGLVGVDEYRLDCISRSAFANIKEIDDAYNKLATDADKKAGGISLARYQELYAQFISNPDESANAVYLFGPLKEVQ.

Alanine 1 carries the post-translational modification N-acetylalanine. 4 consecutive EF-hand domains span residues 4–39 (WDNR…NTLI), 56–91 (IMSN…VCVG), 100–135 (AFKV…RSAF), and 136–171 (ANIK…YAQF). Positions 17, 19, 21, 28, 69, 71, 73, 75, 80, 113, 115, 117, and 124 each coordinate Ca(2+).

As to quaternary structure, SCPs from crayfish, lobster, and shrimp are polymorphic dimers.

Its function is as follows. Like parvalbumins, SCPs seem to be more abundant in fast contracting muscles, but no functional relationship can be established from this distribution. In Astacus leptodactylus (Turkish narrow-clawed crayfish), this protein is Sarcoplasmic calcium-binding protein 1.